Consider the following 310-residue polypeptide: ADP-L-glycero-D-manno-heptose-6-epimerase (310 aa).

NADP(+) is bound by residues 10–11, 31–32, K38, K53, 75–79, and N92; these read FI, DN, and EGACS. Catalysis depends on Y140, which acts as the Proton acceptor. K144 contributes to the NADP(+) binding site. N169 lines the substrate pocket. NADP(+) is bound by residues V170 and K178. Residue K178 is the Proton acceptor of the active site. Residues S180, H187, 201–204, R209, and Y272 each bind substrate; that span reads FEGS.

It belongs to the NAD(P)-dependent epimerase/dehydratase family. HldD subfamily. Homopentamer. The cofactor is NADP(+).

The catalysed reaction is ADP-D-glycero-beta-D-manno-heptose = ADP-L-glycero-beta-D-manno-heptose. It functions in the pathway nucleotide-sugar biosynthesis; ADP-L-glycero-beta-D-manno-heptose biosynthesis; ADP-L-glycero-beta-D-manno-heptose from D-glycero-beta-D-manno-heptose 7-phosphate: step 4/4. Its function is as follows. Catalyzes the interconversion between ADP-D-glycero-beta-D-manno-heptose and ADP-L-glycero-beta-D-manno-heptose via an epimerization at carbon 6 of the heptose. In Salmonella newport (strain SL254), this protein is ADP-L-glycero-D-manno-heptose-6-epimerase.